The sequence spans 274 residues: Undecaprenyl-diphosphatase (274 aa).

The next 7 membrane-spanning stretches (helical) occupy residues Ile4–Ile24, Leu46–Tyr63, Lys82–Gly102, Leu109–Ala129, Ala184–Leu204, Met218–Leu238, and Phe249–Val269.

Belongs to the UppP family.

It localises to the cell inner membrane. The enzyme catalyses di-trans,octa-cis-undecaprenyl diphosphate + H2O = di-trans,octa-cis-undecaprenyl phosphate + phosphate + H(+). In terms of biological role, catalyzes the dephosphorylation of undecaprenyl diphosphate (UPP). Confers resistance to bacitracin. This chain is Undecaprenyl-diphosphatase, found in Dechloromonas aromatica (strain RCB).